Consider the following 357-residue polypeptide: Alanine racemase (357 aa).

The Proton acceptor; specific for D-alanine role is filled by lysine 33. The residue at position 33 (lysine 33) is an N6-(pyridoxal phosphate)lysine. Residue arginine 130 coordinates substrate. The active-site Proton acceptor; specific for L-alanine is tyrosine 252. A substrate-binding site is contributed by methionine 300.

This sequence belongs to the alanine racemase family. Pyridoxal 5'-phosphate serves as cofactor.

It carries out the reaction L-alanine = D-alanine. Its pathway is amino-acid biosynthesis; D-alanine biosynthesis; D-alanine from L-alanine: step 1/1. Functionally, catalyzes the interconversion of L-alanine and D-alanine. May also act on other amino acids. In Acidiphilium cryptum (strain JF-5), this protein is Alanine racemase (alr).